We begin with the raw amino-acid sequence, 216 residues long: tRNA (guanine-N(7)-)-methyltransferase (216 aa).

Positions 44, 69, 96, and 118 each coordinate S-adenosyl-L-methionine. D118 is a catalytic residue. Substrate is bound at residue K122. The segment at 124 to 129 is interaction with RNA; the sequence is RHEKRR. Residues D154 and 191–194 each bind substrate; that span reads TEYE.

It belongs to the class I-like SAM-binding methyltransferase superfamily. TrmB family.

The enzyme catalyses guanosine(46) in tRNA + S-adenosyl-L-methionine = N(7)-methylguanosine(46) in tRNA + S-adenosyl-L-homocysteine. It functions in the pathway tRNA modification; N(7)-methylguanine-tRNA biosynthesis. Catalyzes the formation of N(7)-methylguanine at position 46 (m7G46) in tRNA. This Geobacillus thermodenitrificans (strain NG80-2) protein is tRNA (guanine-N(7)-)-methyltransferase.